We begin with the raw amino-acid sequence, 144 residues long: MDVEKLWNHTKKDSIFQTTHFSSSSKPFFTRSFSTKTSSSPSSKSHFTRSFSTKPSSSSSSSDLIFRRSFSAKPKTSKSLLLSRSCSTKSSADLSSKSSSLSRILSKKGASVTGKCFKVAKEHKSRFYIIKRCVLMLVCWHKHS.

Asparagine 8 is a glycosylation site (N-linked (GlcNAc...) asparagine). Positions 22-63 (SSSSKPFFTRSFSTKTSSSPSSKSHFTRSFSTKPSSSSSSSD) are disordered. The chain crosses the membrane as a helical span at residues 104 to 120 (ILSKKGASVTGKCFKVA). A required for DVL/RTFL small polypeptide activity region spans residues 111–142 (SVTGKCFKVAKEHKSRFYIIKRCVLMLVCWHK).

Belongs to the DVL/RTFL small polypeptides family.

It is found in the cell membrane. Functionally, small polypeptide acting as a regulatory molecule which coordinates cellular responses required for differentiation, growth and development, probably by restricting polar cell proliferation in lateral organs and coordinating socket cell recruitment and differentiation at trichome sites. This is Small polypeptide DEVIL 15 from Arabidopsis thaliana (Mouse-ear cress).